Here is a 184-residue protein sequence, read N- to C-terminus: Acireductone dioxygenase 4 (184 aa).

4 residues coordinate Fe(2+): H86, H88, E92, and H131. The Ni(2+) site is built by H86, H88, E92, and H131.

It belongs to the acireductone dioxygenase (ARD) family. Requires Fe(2+) as cofactor. Ni(2+) serves as cofactor.

It is found in the cytoplasm. The protein localises to the nucleus. The catalysed reaction is 1,2-dihydroxy-5-(methylsulfanyl)pent-1-en-3-one + O2 = 4-methylsulfanyl-2-oxobutanoate + formate + 2 H(+). It catalyses the reaction 1,2-dihydroxy-5-(methylsulfanyl)pent-1-en-3-one + O2 = 3-(methylsulfanyl)propanoate + CO + formate + 2 H(+). It functions in the pathway amino-acid biosynthesis; L-methionine biosynthesis via salvage pathway; L-methionine from S-methyl-5-thio-alpha-D-ribose 1-phosphate: step 5/6. Its function is as follows. Catalyzes 2 different reactions between oxygen and the acireductone 1,2-dihydroxy-3-keto-5-methylthiopentene (DHK-MTPene) depending upon the metal bound in the active site. Fe-containing acireductone dioxygenase (Fe-ARD) produces formate and 2-keto-4-methylthiobutyrate (KMTB), the alpha-ketoacid precursor of methionine in the methionine recycle pathway. Ni-containing acireductone dioxygenase (Ni-ARD) produces methylthiopropionate, carbon monoxide and formate, and does not lie on the methionine recycle pathway. This is Acireductone dioxygenase 4 (ARD4) from Oryza sativa subsp. japonica (Rice).